The chain runs to 260 residues: Zinc import ATP-binding protein ZnuC (260 aa).

The region spanning 18-234 is the ABC transporter domain; it reads IRLQEVAVTF…PEYQKLFGSH (217 aa). 50-57 contributes to the ATP binding site; it reads GNNGAGKT. The segment at 241–260 is disordered; that stretch reads VFPHDHHDHSGPALAGGGRG.

It belongs to the ABC transporter superfamily. Zinc importer (TC 3.A.1.15.5) family. As to quaternary structure, the complex is composed of two ATP-binding proteins (ZnuC), two transmembrane proteins (ZnuB) and a solute-binding protein (ZnuA).

It is found in the cell inner membrane. It carries out the reaction Zn(2+)(out) + ATP(in) + H2O(in) = Zn(2+)(in) + ADP(in) + phosphate(in) + H(+)(in). In terms of biological role, part of the ABC transporter complex ZnuABC involved in zinc import. Responsible for energy coupling to the transport system. This chain is Zinc import ATP-binding protein ZnuC, found in Halorhodospira halophila (strain DSM 244 / SL1) (Ectothiorhodospira halophila (strain DSM 244 / SL1)).